Here is a 354-residue protein sequence, read N- to C-terminus: Mating-type protein MAT-1 (354 aa).

Residues 60 to 117 constitute a DNA-binding region (alpha box); that stretch reads KAKKALNAFVGFRCYYIAIPAFKQWPMKKLSNLISLLWDRDPNKSLWSLMAKAWSNIR.

This sequence belongs to the MATALPHA1 family.

It localises to the nucleus. In terms of biological role, mating type proteins are sequence specific DNA-binding proteins that act as master switches in fungal differentiation by controlling gene expression in a cell type-specific fashion. Transcriptional activator that induces the transcription of alpha-specific genes. The protein is Mating-type protein MAT-1 (MAT1) of Cochliobolus cymbopogonis (Curvularia cymbopogonis).